Consider the following 642-residue polypeptide: Frizzled-1 (642 aa).

A signal peptide spans 1-68 (MAEEAAPSES…WLLEAPLLLG (68 aa)). Disordered stretches follow at residues 26–45 (PGRR…RPRA) and 76–99 (QVSG…QYNG). At 69 to 317 (VRAQAAGQVS…PEELRFSRTW (249 aa)) the chain is on the extracellular side. The 120-residue stretch at 106–225 (PDHGYCQPIS…HGAGELCVGQ (120 aa)) folds into the FZ domain. 5 cysteine pairs are disulfide-bonded: cysteine 111–cysteine 172, cysteine 119–cysteine 165, cysteine 156–cysteine 193, cysteine 182–cysteine 222, and cysteine 186–cysteine 210. A glycan (N-linked (GlcNAc...) asparagine) is linked at asparagine 125. N-linked (GlcNAc...) asparagine glycosylation occurs at asparagine 226. The helical transmembrane segment at 318–338 (IGIWSVLCCASTLFTVLTYLV) threads the bilayer. Topologically, residues 339–349 (DMRRFSYPERP) are cytoplasmic. The helical transmembrane segment at 350 to 370 (IIFLSGCYTAVAVAYIAGFLL) threads the bilayer. Residues 371 to 397 (EDRVVCNDKFAEDGARTVAQGTKKEGC) are Extracellular-facing. A helical membrane pass occupies residues 398–418 (TILFMMLYFFSMASSIWWVIL). The Cytoplasmic segment spans residues 419-440 (SLTWFLAAGMKWGHEAIEANSQ). Residues 441 to 461 (YFHLAAWAVPAIKTITILALG) form a helical membrane-spanning segment. Residues 462–484 (QVDGDVLSGVCFVGLNNVDALRG) lie on the Extracellular side of the membrane. A helical transmembrane segment spans residues 485–505 (FVLAPLFVYLFIGTSFLLAGF). Topologically, residues 506-531 (VSLFRIRTIMKHDGTKTEKLEKLMVR) are cytoplasmic. A helical transmembrane segment spans residues 532–552 (IGVFSVLYTVPATIVIACYFY). Residues 553 to 593 (EQAFRDQWERSWVAQSCKSYAIPCPHLQGGGGVPPHPPMSP) are Extracellular-facing. A helical transmembrane segment spans residues 594 to 614 (DFTVFMIKYLMTLIVGITSGF). The Cytoplasmic segment spans residues 615 to 642 (WIWSGKTLNSWRKFYTRLTNSKQGETTV). Positions 620–625 (KTLNSW) match the Lys-Thr-X-X-X-Trp motif, mediates interaction with the PDZ domain of Dvl family members motif. The short motif at 640-642 (TTV) is the PDZ-binding element.

Belongs to the G-protein coupled receptor Fz/Smo family. Interacts with MYOC. Interacts with WNT7B. In terms of processing, ubiquitinated by ZNRF3, leading to its degradation by the proteasome. As to expression, expressed in chondrocytes.

It localises to the cell membrane. Functionally, receptor for Wnt proteins. Activated by WNT7B. Activated by WNT3A, WNT3, WNT1 and to a lesser extent WNT2, but apparently not by WNT4, WNT5A, WNT5B, WNT6, WNT7A or WNT7B. Contradictory results showing activation by WNT7B have been described for mouse. Functions in the canonical Wnt/beta-catenin signaling pathway. The canonical Wnt/beta-catenin signaling pathway leads to the activation of disheveled proteins, inhibition of GSK-3 kinase, nuclear accumulation of beta-catenin and activation of Wnt target genes. A second signaling pathway involving PKC and calcium fluxes has been seen for some family members, but it is not yet clear if it represents a distinct pathway or if it can be integrated in the canonical pathway, as PKC seems to be required for Wnt-mediated inactivation of GSK-3 kinase. Both pathways seem to involve interactions with G-proteins. May be involved in transduction and intercellular transmission of polarity information during tissue morphogenesis and/or in differentiated tissues. In Mus musculus (Mouse), this protein is Frizzled-1 (Fzd1).